We begin with the raw amino-acid sequence, 242 residues long: MNKRFNSEDKIILAIDGLDVSQAKLLLEECPNIKWVKVGLELFVREGPRVIEILKGLNKKIFLDLKFHDIPNTMRAACSQVSKLGVDIISIHASAGLKALKDSKKASLEGATSVSVKPPLVVGITVLTSFSLKDFQTDLDRNNSIEENVLRLAKLSFDAGLDGCVCSPWEAKMLRSIYKDNFELITPGIRLNIDNKDDQNRIMTPSEAIDNGASKLVIGRSISKAIDPNKALIEIFKSIDSD.

Substrate contacts are provided by residues aspartate 16, lysine 37, 64-73 (DLKFHDIPNT), threonine 128, arginine 190, glutamine 199, glycine 219, and arginine 220. The Proton donor role is filled by lysine 66.

It belongs to the OMP decarboxylase family. Type 1 subfamily. As to quaternary structure, homodimer.

It catalyses the reaction orotidine 5'-phosphate + H(+) = UMP + CO2. It participates in pyrimidine metabolism; UMP biosynthesis via de novo pathway; UMP from orotate: step 2/2. Functionally, catalyzes the decarboxylation of orotidine 5'-monophosphate (OMP) to uridine 5'-monophosphate (UMP). The sequence is that of Orotidine 5'-phosphate decarboxylase from Prochlorococcus marinus (strain MIT 9215).